The following is a 210-amino-acid chain: MRMRNKPWAEDFLLQHDDIVSIDLARKDHIVDWFDQVQPIHIEVGSGMGRFITEMAKAHPEINYIGIERDKNVMIRIVEKAVEQNIRNLRLLTVDAEKLTEIFNEGEIDRIYLNFSDPWPKARHAKRRLTHENFLKVYETILDKDGEIHFKTDNQALFEYSIESMSHYGMKLKNINLNLHDNEPEDNIRTEYEDKFSNKGFRINRLEARF.

S-adenosyl-L-methionine is bound by residues E43, E68, D95, and D117. The active site involves D117. Residues K121, D153, and 190–193 (TEYE) each bind substrate.

The protein belongs to the class I-like SAM-binding methyltransferase superfamily. TrmB family.

It catalyses the reaction guanosine(46) in tRNA + S-adenosyl-L-methionine = N(7)-methylguanosine(46) in tRNA + S-adenosyl-L-homocysteine. It functions in the pathway tRNA modification; N(7)-methylguanine-tRNA biosynthesis. Functionally, catalyzes the formation of N(7)-methylguanine at position 46 (m7G46) in tRNA. The protein is tRNA (guanine-N(7)-)-methyltransferase of Macrococcus caseolyticus (strain JCSC5402) (Macrococcoides caseolyticum).